Consider the following 146-residue polypeptide: MKLFKAEQWNIEVLLPLFEAYRQAYGQAENPERTLAFLTNRMRFNESLFFIAVDENEKAIGFVQLFPRLSSLQLQRYWQITDIFVLEHAQQTEIYAALISKAKDFVHFTQSNRLVAELAQNQYSMLESEGFKLNPKERLFELSLSC.

Residues 1 to 146 enclose the N-acetyltransferase domain; the sequence is MKLFKAEQWN…ERLFELSLSC (146 aa).

The sequence is that of Probable acetyltransferase HI_0677 from Haemophilus influenzae (strain ATCC 51907 / DSM 11121 / KW20 / Rd).